The sequence spans 316 residues: Biotin synthase (316 aa).

The Radical SAM core domain occupies 39–263; sequence NAIQCSTLLS…LFPKAYVRLS (225 aa). Residues Cys-54, Cys-58, and Cys-61 each contribute to the [4Fe-4S] cluster site. Positions 98, 129, 189, and 261 each coordinate [2Fe-2S] cluster.

Belongs to the radical SAM superfamily. Biotin synthase family. Homodimer. The cofactor is [4Fe-4S] cluster. [2Fe-2S] cluster is required as a cofactor.

It carries out the reaction (4R,5S)-dethiobiotin + (sulfur carrier)-SH + 2 reduced [2Fe-2S]-[ferredoxin] + 2 S-adenosyl-L-methionine = (sulfur carrier)-H + biotin + 2 5'-deoxyadenosine + 2 L-methionine + 2 oxidized [2Fe-2S]-[ferredoxin]. It participates in cofactor biosynthesis; biotin biosynthesis; biotin from 7,8-diaminononanoate: step 2/2. Catalyzes the conversion of dethiobiotin (DTB) to biotin by the insertion of a sulfur atom into dethiobiotin via a radical-based mechanism. The sequence is that of Biotin synthase from Acidithiobacillus ferrooxidans (strain ATCC 23270 / DSM 14882 / CIP 104768 / NCIMB 8455) (Ferrobacillus ferrooxidans (strain ATCC 23270)).